The sequence spans 179 residues: Photosystem I assembly protein Ycf3 (179 aa).

TPR repeat units lie at residues 29–62 (AFSYYRAGMSAQSEGKYAEALENYYEALQLEEDP), 66–99 (SYTLYNIGLIYGNNGNYSQALEYYHQALELNSNL), and 126–159 (NLEIRNDEYLELAKEFFDKAAEYWRQALKLAPDN).

It belongs to the Ycf3 family.

It localises to the plastid. The protein localises to the chloroplast thylakoid membrane. In terms of biological role, essential for the assembly of the photosystem I (PSI) complex. May act as a chaperone-like factor to guide the assembly of the PSI subunits. This chain is Photosystem I assembly protein Ycf3, found in Trieres chinensis (Marine centric diatom).